The primary structure comprises 108 residues: Parvalbumin beta (108 aa).

A1 bears the N-acetylalanine mark. C11 and C33 are oxidised to a cystine. 2 EF-hand domains span residues 38-73 and 77-108; these read KSAD…FKAG and LTDA…LVKA. Ca(2+) is bound by residues D51, D53, S55, F57, E59, E62, D90, D92, D94, A96, and E101.

The protein belongs to the parvalbumin family.

Functionally, in muscle, parvalbumin is thought to be involved in relaxation after contraction. It binds two calcium ions. This Merlangius merlangus (Whiting) protein is Parvalbumin beta.